The primary structure comprises 309 residues: MRKIIVGSRKSKLALTQTNWFIDQLKALGLPYEFEVKEIVTKGDVILDVTLSKVGGKGLFVKEIEHALLTKEIDMAVHSMKDMPAVLPEGLMIGCTPKRVDPRDAFISKSGASFKELAEGAILGTSSLRRSAQLLAARPDLQVKWIRGNIDTRLRKLKEEDYDAIILATAGLQRMGWDNEVITEHLDETLCVPAVGQGALAIECREDDKDLLQLLAHINDAVTEKTVAAERVFLHKLEGGCQVPIAGYATITENDAIELTALVGSMDGSVLLKETVVGTDPEKVGLEAADRLIKQGAKELILAANKGQQ.

S-(dipyrrolylmethanemethyl)cysteine is present on Cys241.

It belongs to the HMBS family. In terms of assembly, monomer. The cofactor is dipyrromethane.

The enzyme catalyses 4 porphobilinogen + H2O = hydroxymethylbilane + 4 NH4(+). It functions in the pathway porphyrin-containing compound metabolism; protoporphyrin-IX biosynthesis; coproporphyrinogen-III from 5-aminolevulinate: step 2/4. Its function is as follows. Tetrapolymerization of the monopyrrole PBG into the hydroxymethylbilane pre-uroporphyrinogen in several discrete steps. The polypeptide is Porphobilinogen deaminase (Bacillus cereus (strain AH820)).